The sequence spans 163 residues: Nucleotide-binding protein MAV_4575 (163 aa).

Belongs to the YajQ family.

Functionally, nucleotide-binding protein. This Mycobacterium avium (strain 104) protein is Nucleotide-binding protein MAV_4575.